We begin with the raw amino-acid sequence, 433 residues long: UPF0597 protein Spea_0809 (433 aa).

This sequence belongs to the UPF0597 family.

In Shewanella pealeana (strain ATCC 700345 / ANG-SQ1), this protein is UPF0597 protein Spea_0809.